A 150-amino-acid chain; its full sequence is UPF0756 membrane protein ECA1265 (150 aa).

4 helical membrane-spanning segments follow: residues 1-21, 51-71, 82-102, and 127-147; these read MAYI…GIIS, YGLS…IASG, FLHW…WLGG, and ALFR…SLLI.

This sequence belongs to the UPF0756 family.

The protein localises to the cell membrane. This chain is UPF0756 membrane protein ECA1265, found in Pectobacterium atrosepticum (strain SCRI 1043 / ATCC BAA-672) (Erwinia carotovora subsp. atroseptica).